The following is a 403-amino-acid chain: Phosphoglycerate kinase (403 aa).

Substrate-binding positions include 21 to 23 (DFN), Arg36, 59 to 62 (HLGR), Arg119, and Arg159. Residues Lys214, Gly301, Glu332, and 359 to 362 (GGDS) contribute to the ATP site.

Belongs to the phosphoglycerate kinase family. In terms of assembly, monomer.

Its subcellular location is the cytoplasm. It catalyses the reaction (2R)-3-phosphoglycerate + ATP = (2R)-3-phospho-glyceroyl phosphate + ADP. The protein operates within carbohydrate degradation; glycolysis; pyruvate from D-glyceraldehyde 3-phosphate: step 2/5. The protein is Phosphoglycerate kinase of Lactobacillus acidophilus (strain ATCC 700396 / NCK56 / N2 / NCFM).